Reading from the N-terminus, the 303-residue chain is Recombination-associated protein RdgC (303 aa).

This sequence belongs to the RdgC family.

Its subcellular location is the cytoplasm. It localises to the nucleoid. Its function is as follows. May be involved in recombination. This Salmonella agona (strain SL483) protein is Recombination-associated protein RdgC.